The following is a 47-amino-acid chain: Large ribosomal subunit protein bL27c (47 aa).

The disordered stretch occupies residues Ser-1–Glu-21.

It belongs to the bacterial ribosomal protein bL27 family.

It localises to the plastid. Its subcellular location is the chloroplast. This is Large ribosomal subunit protein bL27c (rpl27) from Porphyridium purpureum (Red alga).